A 60-amino-acid chain; its full sequence is Large ribosomal subunit protein uL30 (60 aa).

The protein belongs to the universal ribosomal protein uL30 family. Part of the 50S ribosomal subunit.

This chain is Large ribosomal subunit protein uL30, found in Lachnoclostridium phytofermentans (strain ATCC 700394 / DSM 18823 / ISDg) (Clostridium phytofermentans).